The primary structure comprises 354 residues: Chorismate synthase (354 aa).

Residues arginine 48 and arginine 54 each coordinate NADP(+). FMN is bound by residues 125 to 127 (RSS), 238 to 239 (NA), glycine 278, 293 to 297 (KPTSS), and arginine 319.

Belongs to the chorismate synthase family. As to quaternary structure, homotetramer. It depends on FMNH2 as a cofactor.

The catalysed reaction is 5-O-(1-carboxyvinyl)-3-phosphoshikimate = chorismate + phosphate. Its pathway is metabolic intermediate biosynthesis; chorismate biosynthesis; chorismate from D-erythrose 4-phosphate and phosphoenolpyruvate: step 7/7. Its function is as follows. Catalyzes the anti-1,4-elimination of the C-3 phosphate and the C-6 proR hydrogen from 5-enolpyruvylshikimate-3-phosphate (EPSP) to yield chorismate, which is the branch point compound that serves as the starting substrate for the three terminal pathways of aromatic amino acid biosynthesis. This reaction introduces a second double bond into the aromatic ring system. The protein is Chorismate synthase of Blochmanniella pennsylvanica (strain BPEN).